The chain runs to 646 residues: Type III restriction-modification enzyme EcoPI Mod subunit (646 aa).

The tract at residues 123-126 is binding of S-adenosyl methionine; it reads DPPY.

The protein belongs to the N(4)/N(6)-methyltransferase family. As to quaternary structure, homodimer. A heterotetramer with stoichiometry Res(2)Mod(2).

It carries out the reaction a 2'-deoxyadenosine in DNA + S-adenosyl-L-methionine = an N(6)-methyl-2'-deoxyadenosine in DNA + S-adenosyl-L-homocysteine + H(+). Functionally, a beta subtype methylase that binds the system-specific DNA recognition site 5'-AGACC-3' and methylates A-3 (of only 1 strand as the other does not have an A residue). DNA restriction requires both the Res and Mod subunits. In Enterobacteriaceae (Bacteriophage P1), this protein is Type III restriction-modification enzyme EcoPI Mod subunit.